A 314-amino-acid polypeptide reads, in one-letter code: Ornithine carbamoyltransferase (314 aa).

Carbamoyl phosphate contacts are provided by residues 61 to 64, glutamine 88, arginine 112, and 139 to 142; these read STRT and HPCQ. L-ornithine contacts are provided by residues asparagine 170, aspartate 234, and 238–239; that span reads SM. Residues 274–275 and arginine 302 contribute to the carbamoyl phosphate site; that span reads CL.

It belongs to the aspartate/ornithine carbamoyltransferase superfamily. OTCase family.

The protein localises to the cytoplasm. It catalyses the reaction carbamoyl phosphate + L-ornithine = L-citrulline + phosphate + H(+). The protein operates within amino-acid biosynthesis; L-arginine biosynthesis; L-arginine from L-ornithine and carbamoyl phosphate: step 1/3. In terms of biological role, reversibly catalyzes the transfer of the carbamoyl group from carbamoyl phosphate (CP) to the N(epsilon) atom of ornithine (ORN) to produce L-citrulline. The polypeptide is Ornithine carbamoyltransferase (Anoxybacillus flavithermus (strain DSM 21510 / WK1)).